A 29-amino-acid chain; its full sequence is Glucagon (29 aa).

A Phosphoserine modification is found at S2.

Belongs to the glucagon family.

The protein localises to the secreted. In terms of biological role, glucagon plays a key role in glucose metabolism and homeostasis. Regulates blood glucose by increasing gluconeogenesis and decreasing glycolysis. This Chinchilla chinchilla (Short-tailed chinchilla) protein is Glucagon (GCG).